Here is a 54-residue protein sequence, read N- to C-terminus: Large ribosomal subunit protein bL33A (54 aa).

Belongs to the bacterial ribosomal protein bL33 family.

In Mesoplasma florum (strain ATCC 33453 / NBRC 100688 / NCTC 11704 / L1) (Acholeplasma florum), this protein is Large ribosomal subunit protein bL33A.